The sequence spans 485 residues: Rhamnulokinase (485 aa).

10–14 (ASSGR) provides a ligand contact to ATP. Residues A78 and 233 to 235 (HDT) contribute to the substrate site. The active-site Proton acceptor is D234. T256 provides a ligand contact to ATP. N293 serves as a coordination point for substrate. Q301 is a binding site for ATP. C351 and C368 are joined by a disulfide. G400 is an ATP binding site.

It belongs to the rhamnulokinase family. The cofactor is Mg(2+).

It catalyses the reaction L-rhamnulose + ATP = L-rhamnulose 1-phosphate + ADP + H(+). The protein operates within carbohydrate degradation; L-rhamnose degradation; glycerone phosphate from L-rhamnose: step 2/3. Involved in the catabolism of L-rhamnose (6-deoxy-L-mannose). Catalyzes the transfer of the gamma-phosphate group from ATP to the 1-hydroxyl group of L-rhamnulose to yield L-rhamnulose 1-phosphate. This chain is Rhamnulokinase, found in Bacillus subtilis (strain 168).